A 250-amino-acid polypeptide reads, in one-letter code: MALKQWMLANIADNKGSLLTPDEQARVFCLSADWIRFLSLPDHDTVLLRDTVAAVEGARQLEMVYPAPEHVHRWSYLCPPEQVRVVIVGQDPYCDGSASGLAFGTLAGRPPPPSLNNVFRELARTVDGFQRPASGCLDAWARRGVLLLNTVFTVVHGQPGSHRHLGWQTLSNHVIRRLSERREHLVFMLWGADAHTCEYLIDRRRHLVLKSCHPSPRNTTRAFVGNDHFILANAYLDTHYRETMDWRLCG.

Asp91 functions as the Proton acceptor in the catalytic mechanism.

This sequence belongs to the uracil-DNA glycosylase (UDG) superfamily. UNG family.

The protein resides in the host nucleus. The enzyme catalyses Hydrolyzes single-stranded DNA or mismatched double-stranded DNA and polynucleotides, releasing free uracil.. Its function is as follows. Excises uracil residues from the DNA which can arise as a result of misincorporation of dUMP residues by DNA polymerase or due to deamination of cytosine. Excises uracil residues from the DNA which can arise as a result of misincorporation of dUMP residues by DNA polymerase or deamination of cytosines. Therefore may reduce deleterious uracil incorporation into the viral genome, particularly in terminally differentiated cells which lack DNA repair enzymes. In Homo sapiens (Human), this protein is Uracil-DNA glycosylase (UL114).